Reading from the N-terminus, the 121-residue chain is Small ribosomal subunit protein uS13 (121 aa).

The tract at residues 94–121 (GLPLRGQRTRTNARTRKGPRRAAQSLKK) is disordered.

It belongs to the universal ribosomal protein uS13 family. In terms of assembly, part of the 30S ribosomal subunit. Forms a loose heterodimer with protein S19. Forms two bridges to the 50S subunit in the 70S ribosome.

Its function is as follows. Located at the top of the head of the 30S subunit, it contacts several helices of the 16S rRNA. In the 70S ribosome it contacts the 23S rRNA (bridge B1a) and protein L5 of the 50S subunit (bridge B1b), connecting the 2 subunits; these bridges are implicated in subunit movement. Contacts the tRNAs in the A and P-sites. This Paraburkholderia phytofirmans (strain DSM 17436 / LMG 22146 / PsJN) (Burkholderia phytofirmans) protein is Small ribosomal subunit protein uS13.